The chain runs to 87 residues: MVKNAFISVISQEENRGSVEFQVVSFTNKIRRLTSHLEFHRKDFLSQRGLRKILGKRQRLLSYLSKKDKVRYTELISQLDIRELTTR.

This sequence belongs to the universal ribosomal protein uS15 family. As to quaternary structure, part of the 30S ribosomal subunit.

The protein localises to the plastid. The protein resides in the chloroplast. This chain is Small ribosomal subunit protein uS15c (rps15), found in Oenothera glazioviana (Large-flowered evening primrose).